The chain runs to 337 residues: Inositol 2-dehydrogenase (337 aa).

Belongs to the Gfo/Idh/MocA family. Homotetramer.

The catalysed reaction is myo-inositol + NAD(+) = scyllo-inosose + NADH + H(+). Its function is as follows. Involved in the oxidation of myo-inositol (MI) to 2-keto-myo-inositol (2KMI or 2-inosose). In Gluconacetobacter diazotrophicus (strain ATCC 49037 / DSM 5601 / CCUG 37298 / CIP 103539 / LMG 7603 / PAl5), this protein is Inositol 2-dehydrogenase.